The following is a 729-amino-acid chain: Cellulose synthase-like protein E1 (729 aa).

The next 2 membrane-spanning stretches (helical) occupy residues 29-49 (VIAYRFFSASVFVCICLIWFY) and 64-84 (LIWFVMFIVEIWFGLYWVVTQ). Residues aspartate 152 and aspartate 443 contribute to the active site. The next 5 helical transmembrane spans lie at 526 to 546 (LPVLIYSVLTSLCLFKGIPLF), 553 to 573 (WFIPFGYVTVAATAYSLAEFL), 644 to 664 (MFLVLGTLGMLNLFCFAAAVA), 680 to 700 (QFVITGVLVVINWPLYKGMLL), and 709 to 729 (MSVTVKSVVLALSACTCLAFL).

The protein belongs to the glycosyltransferase 2 family. Plant cellulose synthase-like E subfamily.

It is found in the golgi apparatus membrane. Its function is as follows. Thought to be a Golgi-localized beta-glycan synthase that polymerize the backbones of noncellulosic polysaccharides (hemicelluloses) of plant cell wall. The polypeptide is Cellulose synthase-like protein E1 (CSLE1) (Arabidopsis thaliana (Mouse-ear cress)).